Reading from the N-terminus, the 521-residue chain is Bifunctional purine biosynthesis protein PurH (521 aa).

The MGS-like domain maps to 1-145 (MIKQALISVS…KNHRDVTVVV (145 aa)).

This sequence belongs to the PurH family.

It catalyses the reaction (6R)-10-formyltetrahydrofolate + 5-amino-1-(5-phospho-beta-D-ribosyl)imidazole-4-carboxamide = 5-formamido-1-(5-phospho-D-ribosyl)imidazole-4-carboxamide + (6S)-5,6,7,8-tetrahydrofolate. It carries out the reaction IMP + H2O = 5-formamido-1-(5-phospho-D-ribosyl)imidazole-4-carboxamide. The protein operates within purine metabolism; IMP biosynthesis via de novo pathway; 5-formamido-1-(5-phospho-D-ribosyl)imidazole-4-carboxamide from 5-amino-1-(5-phospho-D-ribosyl)imidazole-4-carboxamide (10-formyl THF route): step 1/1. Its pathway is purine metabolism; IMP biosynthesis via de novo pathway; IMP from 5-formamido-1-(5-phospho-D-ribosyl)imidazole-4-carboxamide: step 1/1. The polypeptide is Bifunctional purine biosynthesis protein PurH (Burkholderia cenocepacia (strain ATCC BAA-245 / DSM 16553 / LMG 16656 / NCTC 13227 / J2315 / CF5610) (Burkholderia cepacia (strain J2315))).